A 304-amino-acid chain; its full sequence is UDP-3-O-acyl-N-acetylglucosamine deacetylase (304 aa).

Residues His-78, His-237, and Asp-241 each contribute to the Zn(2+) site. The active-site Proton donor is the His-264.

Belongs to the LpxC family. Requires Zn(2+) as cofactor.

It catalyses the reaction a UDP-3-O-[(3R)-3-hydroxyacyl]-N-acetyl-alpha-D-glucosamine + H2O = a UDP-3-O-[(3R)-3-hydroxyacyl]-alpha-D-glucosamine + acetate. Its pathway is glycolipid biosynthesis; lipid IV(A) biosynthesis; lipid IV(A) from (3R)-3-hydroxytetradecanoyl-[acyl-carrier-protein] and UDP-N-acetyl-alpha-D-glucosamine: step 2/6. Its function is as follows. Catalyzes the hydrolysis of UDP-3-O-myristoyl-N-acetylglucosamine to form UDP-3-O-myristoylglucosamine and acetate, the committed step in lipid A biosynthesis. The protein is UDP-3-O-acyl-N-acetylglucosamine deacetylase of Marinobacter nauticus (strain ATCC 700491 / DSM 11845 / VT8) (Marinobacter aquaeolei).